The sequence spans 293 residues: 4-hydroxy-tetrahydrodipicolinate synthase (293 aa).

T45 is a pyruvate binding site. Y133 (proton donor/acceptor) is an active-site residue. Catalysis depends on K161, which acts as the Schiff-base intermediate with substrate. Pyruvate is bound at residue I204.

This sequence belongs to the DapA family. As to quaternary structure, homotetramer; dimer of dimers.

The protein resides in the cytoplasm. It carries out the reaction L-aspartate 4-semialdehyde + pyruvate = (2S,4S)-4-hydroxy-2,3,4,5-tetrahydrodipicolinate + H2O + H(+). Its pathway is amino-acid biosynthesis; L-lysine biosynthesis via DAP pathway; (S)-tetrahydrodipicolinate from L-aspartate: step 3/4. In terms of biological role, catalyzes the condensation of (S)-aspartate-beta-semialdehyde [(S)-ASA] and pyruvate to 4-hydroxy-tetrahydrodipicolinate (HTPA). In Yersinia pseudotuberculosis serotype O:1b (strain IP 31758), this protein is 4-hydroxy-tetrahydrodipicolinate synthase.